The chain runs to 2335 residues: Serine/threonine-protein kinase tor1 (2335 aa).

15 HEAT repeats span residues 1 to 31, 164 to 201, 331 to 371, 410 to 449, 474 to 512, 522 to 560, 562 to 596, 642 to 679, 684 to 722, 728 to 766, 843 to 880, 904 to 923, 924 to 961, 964 to 1003, and 1005 to 1042; these read MEYF…SSTK, LYIS…VVCQ, PYLQ…AVKL, PIQE…AREP, YSLI…RDPI, ESVA…RHLA, PDNI…YNPA, PYIQ…VEGE, DVRG…RSGY, LDYP…LDPY, VFLP…IIGP, LLVI…DEFK, FYLP…FGSN, EYMH…SVNF, and DHAS…QLGY. The FAT domain maps to 1226 to 1781; that stretch reads VISAHASKCN…VYSLTVSSKS (556 aa). One can recognise a PI3K/PI4K catalytic domain in the interval 1955-2269; sequence FHHTFEVISS…ARHADYAALS (315 aa). The G-loop stretch occupies residues 1961–1967; it reads VISSKQR. Phosphothreonine; by PKB/AKT1 is present on threonine 1972. Residues 2134 to 2142 are catalytic loop; the sequence is GLGDRHPSN. The tract at residues 2154 to 2179 is activation loop; it reads HIDFGDCFEVAMHREKFPEKIPFRLT. Positions 2303–2335 constitute an FATC domain; it reads EQLPVKAQVEKLIQQATAPENLCRCYVGWCSFW.

Belongs to the PI3/PI4-kinase family. As to quaternary structure, the target of rapamycin complex 2 (TORC2) is composed of at least bit61, pop3/wat1, sin1, ste20 and tor1. Phosphorylation at Thr-1972 in the ATP-binding region by AKT1 strongly reduces kinase activity.

The protein localises to the cytoplasm. The enzyme catalyses L-seryl-[protein] + ATP = O-phospho-L-seryl-[protein] + ADP + H(+). It carries out the reaction L-threonyl-[protein] + ATP = O-phospho-L-threonyl-[protein] + ADP + H(+). In terms of biological role, catalytic component of TORC2, which regulates multiple cellular processes to control cell growth in response to environmental signals. In response to signals, TORC2 phosphorylates AGC protein kinase family members. TORC2 is required for cell survival under various stress conditions. TORC2 positively controls G1 cell-cycle arrest, sexual development and amino acid uptake. Positively regulates amino acid uptake through the control of expression of amino acid permeases. Responsible for the phosphorylation of AGC kinase gad8 at 'Ser-527' and 'Ser-546', activating gad8 kinase activity and promoting sexual development. This Schizosaccharomyces pombe (strain 972 / ATCC 24843) (Fission yeast) protein is Serine/threonine-protein kinase tor1.